A 185-amino-acid polypeptide reads, in one-letter code: Ribosome-recycling factor (185 aa).

Residues 145 to 164 (DGEAGEDEVSRAEKDLDKTT) are disordered.

The protein belongs to the RRF family.

The protein localises to the cytoplasm. In terms of biological role, responsible for the release of ribosomes from messenger RNA at the termination of protein biosynthesis. May increase the efficiency of translation by recycling ribosomes from one round of translation to another. The protein is Ribosome-recycling factor of Mycobacterium sp. (strain JLS).